A 132-amino-acid chain; its full sequence is MDVTRLVLATLLVFLCFFAAYSHLPPEEKLRDDRSLRSNSSVNLLDLPSVSIVALNKKSKKISRKEAEKRRSSKKEASKQKVARPRTPLSVPCVSTRGSCKPPAPACCHPCASCQCRFFRSACSCRVLNVNC.

Residues 1-22 (MDVTRLVLATLLVFLCFFAAYS) form the signal peptide. N-linked (GlcNAc...) asparagine glycosylation is present at N39. Residues 60–93 (KKISRKEAEKRRSSKKEASKQKVARPRTPLSVPC) form a disordered region. The span at 64–79 (RKEAEKRRSSKKEASK) shows a compositional bias: basic and acidic residues. 5 disulfides stabilise this stretch: C93-C108, C100-C114, C107-C125, C111-C132, and C116-C123. The Agouti domain occupies 93–132 (CVSTRGSCKPPAPACCHPCASCQCRFFRSACSCRVLNVNC).

It is found in the secreted. Functionally, involved in the regulation of melanogenesis. The binding of ASP to MC1R precludes alpha-MSH initiated signaling and thus blocks production of cAMP, leading to a down-regulation of eumelanogenesis (brown/black pigment) and thus increasing synthesis of pheomelanin (yellow/red pigment). This is Agouti-signaling protein (ASIP) from Cebuella pygmaea (Pygmy marmoset).